The following is a 149-amino-acid chain: MAYADNEYRCFVGGLAWATDEQSIERCFNEFGEVFDSKIIIDRETGRSKGFRFVTFKDEDSMRTAIDRMNGQELDGRNITAQARGSGTRGGMVGGYGSGGYRGRRDQGGYNRGGGGGYGGGYGGDRREGGYGDGGYGGQGRSEGGSWRN.

Residues 8–83 enclose the RRM domain; that stretch reads YRCFVGGLAW…LDGRNITAQA (76 aa). Residues 80 to 149 are disordered; sequence TAQARGSGTR…GRSEGGSWRN (70 aa). Gly residues-rich tracts occupy residues 87–101, 110–123, and 131–143; these read GTRG…SGGY, YNRG…GGYG, and YGDG…GRSE.

This sequence belongs to the GR-RBP family.

Functionally, possibly has a role in RNA transcription or processing during stress. In Arabidopsis thaliana (Mouse-ear cress), this protein is Probable glycine-rich RNA-binding protein 1 (RBG1).